Consider the following 348-residue polypeptide: F(420)H(2) dehydrogenase subunit H (348 aa).

The next 8 membrane-spanning stretches (helical) occupy residues 20 to 40, 93 to 113, 127 to 147, 172 to 192, 198 to 218, 259 to 279, 286 to 306, and 328 to 348; these read GVVG…AVWL, IFMM…AVFI, ISVL…FMIA, PLGI…IVEI, LLWN…ALMA, ILGS…PAFV, GLIA…MTII, and LLPL…YLGA.

This sequence belongs to the complex I subunit 1 family. As to quaternary structure, the FPO complex is composed of at least 13 different subunits. FpoA, FpoH, FpoJ, FpoK, FpoL, FpoM and FpoN proteins constitute the membrane sector of the complex.

The protein resides in the cell membrane. It carries out the reaction methanophenazine + reduced coenzyme F420-(gamma-L-Glu)(n) = dihydromethanophenazine + oxidized coenzyme F420-(gamma-L-Glu)(n) + H(+). In terms of biological role, component of the F(420)H(2) dehydrogenase (FPO complex) which is part of the energy-conserving F(420)H(2):heterodisulfide oxidoreductase system. The membrane-bound electron transfer system of the complex plays an important role in the metabolism of methylotrophic methanogens when the organisms grow on methanol or methylamines. Catalyzes the oxidation of methanophenazine to dihydromethanophenazine. It shuttles electrons from F(420)H(2), via FAD and iron-sulfur (Fe-S) centers, to methanophenazine (an electron carrier in the membrane). It couples the redox reaction to proton translocation (for every two electrons transferred, two hydrogen ions are translocated across the cytoplasmic membrane), and thus conserves the redox energy in a proton gradient. This Methanosarcina acetivorans (strain ATCC 35395 / DSM 2834 / JCM 12185 / C2A) protein is F(420)H(2) dehydrogenase subunit H.